The primary structure comprises 300 residues: 4-hydroxy-tetrahydrodipicolinate synthase (300 aa).

A pyruvate-binding site is contributed by Thr45. The Proton donor/acceptor role is filled by Tyr140. Lys169 acts as the Schiff-base intermediate with substrate in catalysis. Residue Ile210 coordinates pyruvate.

Belongs to the DapA family. In terms of assembly, homotetramer; dimer of dimers.

The protein resides in the cytoplasm. The enzyme catalyses L-aspartate 4-semialdehyde + pyruvate = (2S,4S)-4-hydroxy-2,3,4,5-tetrahydrodipicolinate + H2O + H(+). It functions in the pathway amino-acid biosynthesis; L-lysine biosynthesis via DAP pathway; (S)-tetrahydrodipicolinate from L-aspartate: step 3/4. In terms of biological role, catalyzes the condensation of (S)-aspartate-beta-semialdehyde [(S)-ASA] and pyruvate to 4-hydroxy-tetrahydrodipicolinate (HTPA). This is 4-hydroxy-tetrahydrodipicolinate synthase from Helicobacter pylori (strain Shi470).